The primary structure comprises 811 residues: Protein VAC14 homolog (811 aa).

7 HEAT repeats span residues 81-119, 122-160, 240-278, 334-372, 375-412, 431-469, and 472-510; these read DSYM…VAKG, FRYF…IVMQ, ISYL…EIQK, QIDY…IAPK, LLQI…LVSK, SVDF…RTGG, and INMH…SHKS. The span at 775-785 shows a compositional bias: low complexity; it reads TSASGITTTAS. The tract at residues 775 to 811 is disordered; the sequence is TSASGITTTASNSRDSFITRLPPTAALSTGARKKPKQ.

Belongs to the VAC14 family. In terms of assembly, component of the PI(3,5)P2 regulatory complex, composed of ATG18, FIG4, FAB1, VAC14 and VAC7. VAC14 nucleates the assembly of the complex and serves as a scaffold.

The protein resides in the cytoplasm. It localises to the vacuole membrane. The PI(3,5)P2 regulatory complex regulates both the synthesis and turnover of phosphatidylinositol 3,5-bisphosphate (PtdIns(3,5)P2). Regulates the synthesis of PtdIns(3,5)P2 by positive activation of FAB1 and by controlling FIG4 localization. The protein is Protein VAC14 homolog of Schizosaccharomyces pombe (strain 972 / ATCC 24843) (Fission yeast).